A 433-amino-acid chain; its full sequence is Protein translocase subunit SecY (433 aa).

The next 10 helical transmembrane spans lie at 17 to 37 (IIFT…PIPG), 71 to 91 (IFAL…LMSV), 117 to 137 (LTVL…ESMV), 141 to 161 (GPVV…TLVV), 184 to 204 (LIIF…MFEL), 212 to 232 (PLIA…IIFF), 268 to 288 (GVIP…LANF), 310 to 330 (YILL…AIVF), 366 to 386 (LTVI…LLMN), and 388 to 408 (YVIS…VVLD).

It belongs to the SecY/SEC61-alpha family. In terms of assembly, component of the Sec protein translocase complex. Heterotrimer consisting of SecY, SecE and SecG subunits. The heterotrimers can form oligomers, although 1 heterotrimer is thought to be able to translocate proteins. Interacts with the ribosome. Interacts with SecDF, and other proteins may be involved. Interacts with SecA.

It is found in the cell inner membrane. Functionally, the central subunit of the protein translocation channel SecYEG. Consists of two halves formed by TMs 1-5 and 6-10. These two domains form a lateral gate at the front which open onto the bilayer between TMs 2 and 7, and are clamped together by SecE at the back. The channel is closed by both a pore ring composed of hydrophobic SecY resides and a short helix (helix 2A) on the extracellular side of the membrane which forms a plug. The plug probably moves laterally to allow the channel to open. The ring and the pore may move independently. This chain is Protein translocase subunit SecY, found in Rickettsia typhi (strain ATCC VR-144 / Wilmington).